Reading from the N-terminus, the 534-residue chain is Peptide chain release factor 3 (534 aa).

In terms of domain architecture, tr-type G spans 9–278 (SRRRTFAIIS…FFVEHAPSPQ (270 aa)). Residues 18–25 (SHPDAGKT), 86–90 (DTPGH), and 140–143 (NKLD) contribute to the GTP site.

The protein belongs to the TRAFAC class translation factor GTPase superfamily. Classic translation factor GTPase family. PrfC subfamily.

It localises to the cytoplasm. Increases the formation of ribosomal termination complexes and stimulates activities of RF-1 and RF-2. It binds guanine nucleotides and has strong preference for UGA stop codons. It may interact directly with the ribosome. The stimulation of RF-1 and RF-2 is significantly reduced by GTP and GDP, but not by GMP. In Stenotrophomonas maltophilia (strain K279a), this protein is Peptide chain release factor 3.